A 276-amino-acid polypeptide reads, in one-letter code: MALVKTKPTSPGRRSMVKVVNKDLHKGTPYAPLLEKQFQKSGRNNNGHITTRHKGGGHKHHYRVVDFKRNDKDGIPAKVERLEYDPNRSANIALVVFADGERRYIIATKGMVAGQQLLNGSEAPIKAGNNLPIRNIPVGTTINNVEMLPGKGAQIARAAGGSAVLLAREGLYAQVRLRSGEVRRVHIECRATVGEVGNEEHSLRVIGKAGATRWRGIRPTVRGVVMNPVDHPHGGGEGKTAAGRDPVSPWGTPTKGYRTRSNKRTDSMIVQKRHKR.

Residues 225–276 (VMNPVDHPHGGGEGKTAAGRDPVSPWGTPTKGYRTRSNKRTDSMIVQKRHKR) are disordered.

It belongs to the universal ribosomal protein uL2 family. Part of the 50S ribosomal subunit. Forms a bridge to the 30S subunit in the 70S ribosome.

Functionally, one of the primary rRNA binding proteins. Required for association of the 30S and 50S subunits to form the 70S ribosome, for tRNA binding and peptide bond formation. It has been suggested to have peptidyltransferase activity; this is somewhat controversial. Makes several contacts with the 16S rRNA in the 70S ribosome. This chain is Large ribosomal subunit protein uL2, found in Cupriavidus taiwanensis (strain DSM 17343 / BCRC 17206 / CCUG 44338 / CIP 107171 / LMG 19424 / R1) (Ralstonia taiwanensis (strain LMG 19424)).